The sequence spans 988 residues: Protein argonaute 10 (988 aa).

Residues 1–11 (MPIRQMKDSSE) are compositionally biased toward basic and acidic residues. Residues 1–103 (MPIRQMKDSS…PPSQTTSSAV (103 aa)) form a disordered region. A compositionally biased stretch (low complexity) spans 41–57 (PVTVTTPATVTQSQASS). The segment covering 64 to 73 (NRSRRRNRGG) has biased composition (basic residues). Positions 338 to 451 (PVIEFVAQLL…LPMEACKIVE (114 aa)) constitute a PAZ domain. The 322-residue stretch at 625–946 (LLLAILPDNN…AAFRARFYLE (322 aa)) folds into the Piwi domain.

Belongs to the argonaute family. Ago subfamily. As to quaternary structure, interacts with GATA18/HAN and KNAT1/BP. Interacts with RICE1 and RICE2 that act as cofactors. Expressed in roots, stems, leaves, developing embryo, siliques, inflorescences, provascular tissue, shoot apical meristem (SAM) and adaxial (upper) sides of lateral organ primordia. Observed in the floral meristem, the adaxial side of sepal primordia, and the provascular tissue.

The protein resides in the cytoplasm. Involved in RNA-mediated post-transcriptional gene silencing (PTGS). Main component of the RNA-induced silencing complex (RISC) that binds to a short guide RNA such as a microRNA (miRNA) or small interfering RNA (siRNA). RISC uses the mature miRNA or siRNA as a guide for slicer-directed cleavage of homologous mRNAs to repress gene expression. Required for reliable formation of primary and axillary shoot apical meristems. Specifies leaf adaxial identity by repressing the miR165 and miR166 microRNAs in the embryonic shoot apex, in the shoot apical meristem (SAM) and leaf. Represses the microRNA miR398 which targets CCS1 chaperone mRNAs for translational inhibition. Acts as a negative regulator of AGO1 protein level. Like AGO1, is required for stem cell function and organ polarity. Unlike AGO1, is not subjected to small RNA-mediated repression itself. Essential for multiple processes in development. Coregulates, with GATA18/HAN, the shoot apical meristem (SAM) organization. The sequence is that of Protein argonaute 10 from Arabidopsis thaliana (Mouse-ear cress).